Here is a 559-residue protein sequence, read N- to C-terminus: uncharacterized protein (559 aa).

A run of 11 helical transmembrane segments spans residues 103–123 (LAAL…NGLF), 139–159 (FGYY…LFYY), 192–212 (AGIT…SFPF), 223–243 (FFLI…IFLL), 263–283 (WSWV…TLAV), 302–322 (MLIL…SGVA), 348–368 (AAAF…NISD), 387–407 (IRRA…PWKI), 413–434 (AFLA…IFVA), 466–486 (ALIA…MSIN), and 501–521 (IGYF…NLVF).

Belongs to the purine-cytosine permease (2.A.39) family.

Its subcellular location is the golgi apparatus membrane. This is an uncharacterized protein from Schizosaccharomyces pombe (strain 972 / ATCC 24843) (Fission yeast).